The following is a 119-amino-acid chain: Dihydroneopterin aldolase (119 aa).

Residues E21, Y53, and 72 to 73 (IE) each bind substrate. The active-site Proton donor/acceptor is K99.

It belongs to the DHNA family.

It carries out the reaction 7,8-dihydroneopterin = 6-hydroxymethyl-7,8-dihydropterin + glycolaldehyde. Its pathway is cofactor biosynthesis; tetrahydrofolate biosynthesis; 2-amino-4-hydroxy-6-hydroxymethyl-7,8-dihydropteridine diphosphate from 7,8-dihydroneopterin triphosphate: step 3/4. Catalyzes the conversion of 7,8-dihydroneopterin to 6-hydroxymethyl-7,8-dihydropterin. This Streptococcus pyogenes serotype M3 (strain ATCC BAA-595 / MGAS315) protein is Dihydroneopterin aldolase (folB).